The following is a 397-amino-acid chain: MAKAKFQRTKPHVNIGTLGHVDHGKTTLTAAISKVLADKYPSATNVQRDFASIDSAPEERQRGITINISHVEYETPKRHYAHVDAPGHADYIKNMITGAAQMDGAILVVAATDGPMAQTREHVLLAKQVGVPYLLVALNKSDMVDDEEILELVELEVRELLSSQDYLGDDAPVVRVSGLKALEGDEKWVQSVLDLMEAVDNNIPDPVRDKDKPFLMPVEDVFTITGRGTVVTGRAERGTLAVNSEVEIVGIRPTQKTTVTGIEMFHKQLDEAWAGENCGLLLRGTKREDVERGQVVVKPGSVTPHTSFEGTAYILSKDEGGRNNPIYTNYRPQFYFRTTDVTGVISLTEGTEMVMPGDTTDMTVELIQPIAMEEGLGFAIREGGRTVGAGKVTKIIN.

A tr-type G domain is found at 10 to 207; it reads KPHVNIGTLG…AVDNNIPDPV (198 aa). The tract at residues 19 to 26 is G1; sequence GHVDHGKT. 19-26 is a GTP binding site; sequence GHVDHGKT. Residue Thr-26 coordinates Mg(2+). The interval 63–67 is G2; sequence GITIN. The segment at 84-87 is G3; sequence DAPG. Residues 84-88 and 139-142 each bind GTP; these read DAPGH and NKSD. A G4 region spans residues 139–142; it reads NKSD. The segment at 177-179 is G5; the sequence is SGL.

The protein belongs to the TRAFAC class translation factor GTPase superfamily. Classic translation factor GTPase family. EF-Tu/EF-1A subfamily. As to quaternary structure, monomer.

The protein localises to the cytoplasm. The enzyme catalyses GTP + H2O = GDP + phosphate + H(+). Its function is as follows. GTP hydrolase that promotes the GTP-dependent binding of aminoacyl-tRNA to the A-site of ribosomes during protein biosynthesis. The protein is Elongation factor Tu of Leifsonia xyli subsp. xyli (strain CTCB07).